Here is a 186-residue protein sequence, read N- to C-terminus: Imidazoleglycerol-phosphate dehydratase (186 aa).

It belongs to the imidazoleglycerol-phosphate dehydratase family.

It localises to the cytoplasm. The catalysed reaction is D-erythro-1-(imidazol-4-yl)glycerol 3-phosphate = 3-(imidazol-4-yl)-2-oxopropyl phosphate + H2O. The protein operates within amino-acid biosynthesis; L-histidine biosynthesis; L-histidine from 5-phospho-alpha-D-ribose 1-diphosphate: step 6/9. The chain is Imidazoleglycerol-phosphate dehydratase from Dictyoglomus turgidum (strain DSM 6724 / Z-1310).